A 254-amino-acid polypeptide reads, in one-letter code: Winged helix repair factor 1 (254 aa).

The Bipartite nuclear localization signal motif lies at lysine 4–arginine 21. Winged helix domain stretches follow at residues glutamate 32 to phenylalanine 104, proline 120 to proline 179, and glycine 180 to threonine 254.

It belongs to the STK19 family. As to quaternary structure, monomer in solution. Homodimer; when bound to DNA. Component of a transcription-coupled nucleotide excision repair (TC-NER) complex composed of STK19, ERCC6, ERCC8, DDA1, DDB1, ELOF1 and UVSSA which assembles and interacts with the multiprotein RNA polymerase II complex when it stalls at DNA lesions. In terms of tissue distribution, monocytes, hepatocytes, epithelial cells, T- and B-lymphocytes.

It is found in the nucleus. The protein resides in the cytoplasm. Functionally, DNA-binding protein which is required for efficient transcription-coupled nucleotide excision repair (TC-NER). Acts as part of a TC-NER complex which assembles and interacts with RNA polymerase II (RNAPII) when it stalls at DNA lesions. TC-NER complex subunit UVSSA binds to the GTF2H1/p62 subunit of the TFIIH transcription factor complex, tethering TFIIH to the TC-NER complex. WHR1/STK19 then interacts with the XPD helicase subunit of TFIIH which guides TFIIH to DNA downstream of the stalled RNAPII, ensuring DNA repair. Directly interacts with RNAPII and also binds to downstream DNA. Promotes the timely removal of DNA damage-stalled RNAPII, allowing downstream NER factors to access DNA lesions. Required for monoubiquitination of UVSSA. Regulates repositioning and stabilization of UVSSA within the TC-NER complex. Stimulates ubiquitination of RNAPII complex member RBP1. Also binds to RNA and regulates the expression levels of many mRNAs. The protein is Winged helix repair factor 1 of Homo sapiens (Human).